Here is a 475-residue protein sequence, read N- to C-terminus: Methylenetetrahydrofolate--tRNA-(uracil-5-)-methyltransferase TrmFO (475 aa).

9-14 serves as a coordination point for FAD; that stretch reads GGGLAG. Residues 427 to 447 form a disordered region; sequence APRNETGRRLRGPEKAALKKR.

The protein belongs to the MnmG family. TrmFO subfamily. The cofactor is FAD.

The protein localises to the cytoplasm. It catalyses the reaction uridine(54) in tRNA + (6R)-5,10-methylene-5,6,7,8-tetrahydrofolate + NADH + H(+) = 5-methyluridine(54) in tRNA + (6S)-5,6,7,8-tetrahydrofolate + NAD(+). It carries out the reaction uridine(54) in tRNA + (6R)-5,10-methylene-5,6,7,8-tetrahydrofolate + NADPH + H(+) = 5-methyluridine(54) in tRNA + (6S)-5,6,7,8-tetrahydrofolate + NADP(+). Its function is as follows. Catalyzes the folate-dependent formation of 5-methyl-uridine at position 54 (M-5-U54) in all tRNAs. The protein is Methylenetetrahydrofolate--tRNA-(uracil-5-)-methyltransferase TrmFO of Methylobacterium radiotolerans (strain ATCC 27329 / DSM 1819 / JCM 2831 / NBRC 15690 / NCIMB 10815 / 0-1).